A 216-amino-acid polypeptide reads, in one-letter code: Major fimbrial subunit (216 aa).

The N-terminal stretch at 1-20 is a signal peptide; that stretch reads MKKTLLGSLILLAFAGNVQA. Cys-41 and Cys-81 are joined by a disulfide.

It belongs to the fimbrial protein family.

It is found in the fimbrium. Functionally, mediates adherence to oropharyngeal epithelial cells. Helps the airway colonization process. The protein is Major fimbrial subunit (hifA) of Haemophilus influenzae.